The primary structure comprises 192 residues: UPF0312 protein YPK_1931 (192 aa).

Residues 1–23 form the signal peptide; that stretch reads MINKTLLGLSLGALMFTAGSAVA.

This sequence belongs to the UPF0312 family. Type 1 subfamily.

The protein localises to the periplasm. The protein is UPF0312 protein YPK_1931 of Yersinia pseudotuberculosis serotype O:3 (strain YPIII).